We begin with the raw amino-acid sequence, 485 residues long: Taxane 13-alpha-hydroxylase (485 aa).

Cysteine 431 serves as a coordination point for heme.

The protein belongs to the cytochrome P450 family. It depends on heme as a cofactor.

The enzyme catalyses taxa-4(20),11-dien-5alpha-ol + reduced [NADPH--hemoprotein reductase] + O2 = taxa-4(20),11-dien-5alpha,13alpha-diol + oxidized [NADPH--hemoprotein reductase] + H2O + H(+). The protein operates within alkaloid biosynthesis; taxol biosynthesis. Functionally, involved in the transformation of a taxadienyl acetate by hydroxylation at C13 to yield taxadien-5-alpha-acetoxy-13-alpha-ol. This Taxus cuspidata (Japanese yew) protein is Taxane 13-alpha-hydroxylase (CYP725A2).